The primary structure comprises 204 residues: Outer-membrane lipoprotein carrier protein (204 aa).

The signal sequence occupies residues 1–21 (MKKYLNLTALLLVGISNVTWA).

Belongs to the LolA family. Monomer.

It localises to the periplasm. Functionally, participates in the translocation of lipoproteins from the inner membrane to the outer membrane. Only forms a complex with a lipoprotein if the residue after the N-terminal Cys is not an aspartate (The Asp acts as a targeting signal to indicate that the lipoprotein should stay in the inner membrane). The protein is Outer-membrane lipoprotein carrier protein of Histophilus somni (strain 129Pt) (Haemophilus somnus).